The primary structure comprises 422 residues: Adenylosuccinate synthetase (422 aa).

Residues 11-17 and 39-41 each bind GTP; these read GDEGKGK and GHT. The active-site Proton acceptor is aspartate 12. Positions 12 and 39 each coordinate Mg(2+). Residues 12–15, 37–40, threonine 129, arginine 143, asparagine 219, threonine 234, and arginine 298 each bind IMP; these read DEGK and NAGH. Catalysis depends on histidine 40, which acts as the Proton donor. 294-300 provides a ligand contact to substrate; it reads VTTGRRR. Residues arginine 300, 326–328, and 409–411 each bind GTP; these read KLD and GTG.

Belongs to the adenylosuccinate synthetase family. Homodimer. The cofactor is Mg(2+).

The protein localises to the cytoplasm. It carries out the reaction IMP + L-aspartate + GTP = N(6)-(1,2-dicarboxyethyl)-AMP + GDP + phosphate + 2 H(+). It functions in the pathway purine metabolism; AMP biosynthesis via de novo pathway; AMP from IMP: step 1/2. In terms of biological role, plays an important role in the de novo pathway and in the salvage pathway of purine nucleotide biosynthesis. Catalyzes the first committed step in the biosynthesis of AMP from IMP. The protein is Adenylosuccinate synthetase of Blastomyces gilchristii (strain SLH14081) (Blastomyces dermatitidis).